Consider the following 1097-residue polypeptide: DNA-directed RNA polymerase subunit beta (1097 aa).

The tract at residues glutamine 1072–aspartate 1097 is disordered.

It belongs to the RNA polymerase beta chain family. As to quaternary structure, in cyanobacteria the RNAP catalytic core is composed of 2 alpha, 1 beta, 1 beta', 1 gamma and 1 omega subunit. When a sigma factor is associated with the core the holoenzyme is formed, which can initiate transcription.

The catalysed reaction is RNA(n) + a ribonucleoside 5'-triphosphate = RNA(n+1) + diphosphate. Functionally, DNA-dependent RNA polymerase catalyzes the transcription of DNA into RNA using the four ribonucleoside triphosphates as substrates. The protein is DNA-directed RNA polymerase subunit beta of Prochlorococcus marinus (strain MIT 9303).